The sequence spans 105 residues: Thioredoxin (105 aa).

Residues 1–105 (MFELDKDTFE…NVEAMVKKYI (105 aa)) form the Thioredoxin domain. The cysteines at positions 29 and 32 are disulfide-linked.

Belongs to the thioredoxin family.

Functionally, participates in various redox reactions through the reversible oxidation of its active center dithiol to a disulfide and catalyzes dithiol-disulfide exchange reactions. The protein is Thioredoxin (trxA) of Acetoanaerobium sticklandii (strain ATCC 12662 / DSM 519 / JCM 1433 / CCUG 9281 / NCIMB 10654 / HF) (Clostridium sticklandii).